The following is a 255-amino-acid chain: 5-oxoprolinase subunit A 1 (255 aa).

It belongs to the LamB/PxpA family. In terms of assembly, forms a complex composed of PxpA, PxpB and PxpC.

The enzyme catalyses 5-oxo-L-proline + ATP + 2 H2O = L-glutamate + ADP + phosphate + H(+). Catalyzes the cleavage of 5-oxoproline to form L-glutamate coupled to the hydrolysis of ATP to ADP and inorganic phosphate. The protein is 5-oxoprolinase subunit A 1 of Bradyrhizobium diazoefficiens (strain JCM 10833 / BCRC 13528 / IAM 13628 / NBRC 14792 / USDA 110).